Reading from the N-terminus, the 552-residue chain is Glutathione reductase, chloroplastic/mitochondrial (552 aa).

Residues 1-60 (MNQAMATPLSLSCCSPTLTRSTLFFTKTFPFSRSFSTPLPLSTKTLISLSPPHRTFAVRA) constitute a chloroplast and mitochondrion transit peptide. FAD contacts are provided by serine 83, glycine 84, glutamate 103, threonine 120, cysteine 121, and lysine 129. Serine 83 contacts glutathione. Residues cysteine 121 and cysteine 126 are joined by a disulfide bond. Residue tyrosine 178 participates in glutathione binding. Glycine 194 serves as a coordination point for FAD. Glycine 254, isoleucine 257, glutamate 260, arginine 277, arginine 283, and glycine 341 together coordinate NADP(+). FAD is bound by residues aspartate 382 and threonine 390. Alanine 420 lines the NADP(+) pocket. Histidine 515 serves as a coordination point for FAD. Histidine 515 acts as the Proton acceptor in catalysis. Residues 527 to 552 (TPTRKVRKNQASQGKSDSKAKAVAGS) form a disordered region.

The protein belongs to the class-I pyridine nucleotide-disulfide oxidoreductase family. As to quaternary structure, homodimer. The cofactor is FAD.

The protein resides in the plastid. It localises to the chloroplast. It is found in the mitochondrion. It catalyses the reaction 2 glutathione + NADP(+) = glutathione disulfide + NADPH + H(+). Functionally, catalyzes the reduction of glutathione disulfide (GSSG) to reduced glutathione (GSH). Maintains high levels of GSH in the chloroplast. The chain is Glutathione reductase, chloroplastic/mitochondrial (GR) from Pisum sativum (Garden pea).